A 490-amino-acid chain; its full sequence is Monocarboxylate transporter 3 (490 aa).

At 1–14 (MGAGGPRRGAGPPD) the chain is on the cytoplasmic side. A helical membrane pass occupies residues 15–35 (GGWGWVVLGACFVITGFAYGF). The Extracellular portion of the chain corresponds to 36–58 (PKAVSVFFRELKRDFGAGYSDTA). Residues 59 to 79 (WVSSIMLAMLYGTGPLSSILV) traverse the membrane as a helical segment. The Cytoplasmic portion of the chain corresponds to 80-85 (TRFGCR). The helical transmembrane segment at 86-106 (PVMLAGGLLASAGMILASFAS) threads the bilayer. Topologically, residues 107-115 (RLLELYLTA) are extracellular. A helical transmembrane segment spans residues 116–136 (GVLTGLGLALNFQPSLIMLGL). Residues 137–147 (YFERRRPLANG) lie on the Cytoplasmic side of the membrane. Residues 148–168 (LAAAGSPVFLSTLSPLGQLLG) form a helical membrane-spanning segment. Over 169-172 (ERFG) the chain is Extracellular. The helical transmembrane segment at 173-193 (WRGGFLLFGGLLLHCCACGAV) threads the bilayer. Residues 194-230 (MRPPPGPQPRPDPAPPGGRARHRQLLDLAVCTDRTFM) lie on the Cytoplasmic side of the membrane. The chain crosses the membrane as a helical span at residues 231–251 (VYMVTKFLMALGLFVPAILLV). Topologically, residues 252–257 (NYAKDA) are extracellular. Residues 258–278 (GVPDAEAAFLLSIVGFVDIVA) form a helical membrane-spanning segment. The Cytoplasmic portion of the chain corresponds to 279–293 (RPACGALAGLGRLRP). Residues 294 to 314 (HVPYLFSLALLANGLTDLISA) traverse the membrane as a helical segment. Over 315-318 (RARS) the chain is Extracellular. A helical membrane pass occupies residues 319 to 339 (YGTLVAFCIAFGLSYGMVGAL). Residues 340–352 (QFEVLMATVGAPR) lie on the Cytoplasmic side of the membrane. The chain crosses the membrane as a helical span at residues 353 to 373 (FPSALGLVLLVEAVAVLIGPP). The Extracellular segment spans residues 374–386 (SAGRLVDALKNYE). A helical transmembrane segment spans residues 387 to 407 (IIFYLAGSEVVLAGVFMAVTT). Topologically, residues 408-490 (YCCQRCSKDI…GGHEAHGQNA (83 aa)) are cytoplasmic. The segment at 419 to 490 (PGPSAEGGTS…GGHEAHGQNA (72 aa)) is disordered. 2 basolateral sorting signal regions span residues 426–460 (GTSD…VLSP) and 461–480 (RAGS…HESV). Over residues 475–490 (LSHESVGGHEAHGQNA) the composition is skewed to basic and acidic residues.

Belongs to the major facilitator superfamily. Monocarboxylate porter (TC 2.A.1.13) family. As to expression, retinal pigment epithelium.

Its subcellular location is the basolateral cell membrane. It carries out the reaction (S)-lactate(in) + H(+)(in) = (S)-lactate(out) + H(+)(out). Functionally, probable retinal pigment epithelium (RPE)-specific proton-coupled L-lactate transporter. May facilitate transport of lactate and H(+) out of the retina and could therefore play a role in pH and ion homeostasis of the outer retina. The sequence is that of Monocarboxylate transporter 3 (Slc16a8) from Rattus norvegicus (Rat).